We begin with the raw amino-acid sequence, 461 residues long: Dihydrolipoyl dehydrogenase (461 aa).

FAD-binding positions include 34-42 (EEDQAGGTC), K51, and G114. C42 and C47 are joined by a disulfide. NAD(+)-binding positions include 177 to 181 (GGGVI), E200, and 261 to 264 (AIGR). FAD is bound by residues D304 and A312. Residue H436 is the Proton acceptor of the active site.

It belongs to the class-I pyridine nucleotide-disulfide oxidoreductase family. It depends on FAD as a cofactor.

It localises to the cytoplasm. It carries out the reaction N(6)-[(R)-dihydrolipoyl]-L-lysyl-[protein] + NAD(+) = N(6)-[(R)-lipoyl]-L-lysyl-[protein] + NADH + H(+). Functionally, the branched-chain alpha-keto dehydrogenase complex catalyzes the overall conversion of alpha-keto acids to acyl-CoA and CO(2). It contains multiple copies of 3 enzymatic components: branched-chain alpha-keto acid decarboxylase (E1), lipoamide acyltransferase (E2) and lipoamide dehydrogenase (E3). This is Dihydrolipoyl dehydrogenase (lpdA) from Chlamydia pneumoniae (Chlamydophila pneumoniae).